The chain runs to 360 residues: Phospho-N-acetylmuramoyl-pentapeptide-transferase (360 aa).

The next 10 helical transmembrane spans lie at 21–41 (YVTF…LWWG), 74–94 (MGGI…GDLG), 97–117 (YVWV…IDDY), 134–154 (YILQ…SADM), 168–188 (IMPQ…VGSS), 199–219 (GLAI…AYLS), 236–256 (AGEL…FLWF), 263–283 (VFMG…IAVL), 288–308 (ILLV…ILQV), and 338–358 (VIVR…ATLK).

It belongs to the glycosyltransferase 4 family. MraY subfamily. The cofactor is Mg(2+).

The protein resides in the cell inner membrane. The enzyme catalyses UDP-N-acetyl-alpha-D-muramoyl-L-alanyl-gamma-D-glutamyl-meso-2,6-diaminopimeloyl-D-alanyl-D-alanine + di-trans,octa-cis-undecaprenyl phosphate = di-trans,octa-cis-undecaprenyl diphospho-N-acetyl-alpha-D-muramoyl-L-alanyl-D-glutamyl-meso-2,6-diaminopimeloyl-D-alanyl-D-alanine + UMP. It functions in the pathway cell wall biogenesis; peptidoglycan biosynthesis. In terms of biological role, catalyzes the initial step of the lipid cycle reactions in the biosynthesis of the cell wall peptidoglycan: transfers peptidoglycan precursor phospho-MurNAc-pentapeptide from UDP-MurNAc-pentapeptide onto the lipid carrier undecaprenyl phosphate, yielding undecaprenyl-pyrophosphoryl-MurNAc-pentapeptide, known as lipid I. This is Phospho-N-acetylmuramoyl-pentapeptide-transferase from Shewanella woodyi (strain ATCC 51908 / MS32).